Here is a 142-residue protein sequence, read N- to C-terminus: Transcriptional regulator MraZ (142 aa).

SpoVT-AbrB domains follow at residues 5 to 47 (THTP…PTET) and 76 to 119 (ASDT…DATE).

The protein belongs to the MraZ family. In terms of assembly, forms oligomers.

It localises to the cytoplasm. It is found in the nucleoid. The polypeptide is Transcriptional regulator MraZ (Cutibacterium acnes (strain DSM 16379 / KPA171202) (Propionibacterium acnes)).